The sequence spans 178 residues: Acireductone dioxygenase (178 aa).

Positions 81, 83, 87, and 126 each coordinate Fe(2+). Positions 81, 83, 87, and 126 each coordinate Ni(2+).

It belongs to the acireductone dioxygenase (ARD) family. Requires Fe(2+) as cofactor. It depends on Ni(2+) as a cofactor.

The protein localises to the cytoplasm. It localises to the nucleus. The enzyme catalyses 1,2-dihydroxy-5-(methylsulfanyl)pent-1-en-3-one + O2 = 4-methylsulfanyl-2-oxobutanoate + formate + 2 H(+). It catalyses the reaction 1,2-dihydroxy-5-(methylsulfanyl)pent-1-en-3-one + O2 = 3-(methylsulfanyl)propanoate + CO + formate + 2 H(+). The protein operates within amino-acid biosynthesis; L-methionine biosynthesis via salvage pathway; L-methionine from S-methyl-5-thio-alpha-D-ribose 1-phosphate: step 5/6. Its function is as follows. Catalyzes 2 different reactions between oxygen and the acireductone 1,2-dihydroxy-3-keto-5-methylthiopentene (DHK-MTPene) depending upon the metal bound in the active site. Fe-containing acireductone dioxygenase (Fe-ARD) produces formate and 2-keto-4-methylthiobutyrate (KMTB), the alpha-ketoacid precursor of methionine in the methionine recycle pathway. Ni-containing acireductone dioxygenase (Ni-ARD) produces methylthiopropionate, carbon monoxide and formate, and does not lie on the methionine recycle pathway. The sequence is that of Acireductone dioxygenase (adi1) from Neurospora crassa (strain ATCC 24698 / 74-OR23-1A / CBS 708.71 / DSM 1257 / FGSC 987).